The chain runs to 65 residues: Gallinacin-1 (65 aa).

The first 19 residues, 1–19 (MRIVYLLLPFILLLAQGAA), serve as a signal peptide directing secretion. The propeptide occupies 20-25 (GSSQAL). 3 disulfides stabilise this stretch: Cys31–Cys59, Cys38–Cys53, and Cys43–Cys60.

This sequence belongs to the beta-defensin family. In terms of tissue distribution, strong expression in the bone marrow, lung, testis. Moderate expression in the bursa and intestine. Low expression in the cloaca, gall bladder, brain and pancreas. Expressed in the vagina, ovarian stroma and the theca and granulosa layers of the ovarian follicle.

It localises to the secreted. The protein resides in the cytoplasmic granule. In terms of biological role, has bactericidal activity. Potent activity against E.coli ML-35, L.monocytogenes EGD and C.albicans. This Gallus gallus (Chicken) protein is Gallinacin-1 (GAL1).